We begin with the raw amino-acid sequence, 161 residues long: Transcriptional repressor NrdR (161 aa).

A zinc finger lies at 3 to 34 (CPSCQHTDSRVLESRAADSGKSVRRRRECLNC). The ATP-cone domain occupies 49–139 (ITVVKRSGTR…VYGKFSGISD (91 aa)).

Belongs to the NrdR family. Zn(2+) serves as cofactor.

In terms of biological role, negatively regulates transcription of bacterial ribonucleotide reductase nrd genes and operons by binding to NrdR-boxes. This chain is Transcriptional repressor NrdR, found in Synechococcus sp. (strain RCC307).